The following is an 85-amino-acid chain: 4-hydroxyphenylacetate decarboxylase small subunit (85 aa).

8 residues coordinate [4Fe-4S] cluster: H4, C7, C20, C34, C43, C46, C60, and C78.

It belongs to the HPA decarboxylase small subunit family. Heterooctamer consisting of 4 large (HpdB) subunits and 4 small (HpdC) subunits, arranged as a tetramer of heterodimers. It depends on [4Fe-4S] cluster as a cofactor.

It carries out the reaction 4-hydroxyphenylacetate + H(+) = 4-methylphenol + CO2. It catalyses the reaction 3,4-dihydroxyphenylacetate + H(+) = 4-methylcatechol + CO2. Component of the HPA decarboxylase that decarboxylates phenylacetates with a hydroxyl group in the p-position. Active toward 4-hydroxyphenylacetate and 3,4-dihydroxyphenylacetate, forming 4-methylphenol and 4-methylcatechol, respectively. Is likely involved in the catabolism of aromatic amino acids such as tyrosine fermentation. 4-methylphenol (p-cresol) formation provides metabolic toxicity, which allows an active suppression of other microbes and may provide growth advantages for the producers in highly competitive environments. The small subunit is essential for enzymatic activity of HPA decarboxylase, and also seems to be involved in the regulation of the enzyme oligomeric state and catalytic activity. The polypeptide is 4-hydroxyphenylacetate decarboxylase small subunit (Clostridioides difficile (strain 630) (Peptoclostridium difficile)).